Reading from the N-terminus, the 358-residue chain is Psilocybin cluster transcription regulator (358 aa).

Disordered regions lie at residues 1–40 (MAPA…IAGM) and 62–212 (SGGK…RRRR). Residues 18–29 (PPAPGAPAPANA) show a composition bias toward pro residues. Residues 79-91 (QTLSNLAQAQPYG) are compositionally biased toward polar residues. Residues 179 to 190 (PTTGRRGGRSAT) show a composition bias toward low complexity. Basic and acidic residues predominate over residues 195–209 (EWSRQRKDNHKEVER). The segment at 199–212 (QRKDNHKEVERRRR) is basic motif. Residues 199–249 (QRKDNHKEVERRRRGNINEGINELGRIVPSGSGEKAKGAILSRAVQYIHHL) form the bHLH domain. Positions 213–249 (GNINEGINELGRIVPSGSGEKAKGAILSRAVQYIHHL) are helix-loop-helix motif. The stretch at 264–306 (KLLMDQAMGDLQAQLEEVKRLWEEERMARTRLEAELEVLRNMN) forms a coiled coil. Positions 308–358 (VNAGSAPASKDESAAGTKRRSTDGAEAATAATESSTANAEGERDGKRQRTE) are disordered. The span at 331–346 (GAEAATAATESSTANA) shows a compositional bias: low complexity. Over residues 347-358 (EGERDGKRQRTE) the composition is skewed to basic and acidic residues.

It localises to the nucleus. Its function is as follows. Transcription factor that may regulate the expression of the gene cluster that mediates the biosynthesis of psilocybin, a psychotropic tryptamine-derived natural product. The chain is Psilocybin cluster transcription regulator from Psilocybe cubensis (Psychedelic mushroom).